We begin with the raw amino-acid sequence, 229 residues long: Large ribosomal subunit protein uL1 (229 aa).

It belongs to the universal ribosomal protein uL1 family. Part of the 50S ribosomal subunit.

Its function is as follows. Binds directly to 23S rRNA. The L1 stalk is quite mobile in the ribosome, and is involved in E site tRNA release. In terms of biological role, protein L1 is also a translational repressor protein, it controls the translation of the L11 operon by binding to its mRNA. The protein is Large ribosomal subunit protein uL1 of Actinobacillus succinogenes (strain ATCC 55618 / DSM 22257 / CCUG 43843 / 130Z).